The sequence spans 357 residues: Ribosomal RNA large subunit methyltransferase M (357 aa).

S-adenosyl-L-methionine is bound by residues serine 190, 223–226 (APGG), aspartate 242, aspartate 262, and aspartate 278. Lysine 307 (proton acceptor) is an active-site residue.

The protein belongs to the class I-like SAM-binding methyltransferase superfamily. RNA methyltransferase RlmE family. RlmM subfamily. Monomer.

It is found in the cytoplasm. The enzyme catalyses cytidine(2498) in 23S rRNA + S-adenosyl-L-methionine = 2'-O-methylcytidine(2498) in 23S rRNA + S-adenosyl-L-homocysteine + H(+). Its function is as follows. Catalyzes the 2'-O-methylation at nucleotide C2498 in 23S rRNA. The protein is Ribosomal RNA large subunit methyltransferase M of Chromohalobacter salexigens (strain ATCC BAA-138 / DSM 3043 / CIP 106854 / NCIMB 13768 / 1H11).